The primary structure comprises 368 residues: Ferredoxin--NADP reductase 2 (368 aa).

The FAD site is built by D57, Q65, Y70, V110, F145, D310, and T351.

The protein belongs to the ferredoxin--NADP reductase type 2 family. In terms of assembly, homodimer. The cofactor is FAD.

The enzyme catalyses 2 reduced [2Fe-2S]-[ferredoxin] + NADP(+) + H(+) = 2 oxidized [2Fe-2S]-[ferredoxin] + NADPH. The protein is Ferredoxin--NADP reductase 2 of Cupriavidus pinatubonensis (strain JMP 134 / LMG 1197) (Cupriavidus necator (strain JMP 134)).